The sequence spans 414 residues: Zinc metalloproteinase-disintegrin-like batroxstatin-3 (414 aa).

N-linked (GlcNAc...) asparagine glycosylation is found at Asn-7 and Asn-70. The Peptidase M12B domain occupies 10–204 (KYIKLVIVAD…HTPQCILNEP (195 aa)). Intrachain disulfides connect Cys-121/Cys-199, Cys-161/Cys-183, and Cys-163/Cys-168. A Zn(2+)-binding site is contributed by His-146. The active site involves Glu-147. His-150 and His-156 together coordinate Zn(2+). Residues 212–298 (PEVCGNYLLE…HCPTDRFHRN (87 aa)) enclose the Disintegrin domain. Ca(2+) contacts are provided by Val-214, Asn-217, Glu-221, Glu-224, and Asp-227. 14 cysteine pairs are disulfide-bonded: Cys-215/Cys-244, Cys-226/Cys-239, Cys-228/Cys-234, Cys-238/Cys-261, Cys-252/Cys-258, Cys-257/Cys-283, Cys-270/Cys-290, Cys-277/Cys-309, Cys-302/Cys-314, Cys-321/Cys-371, Cys-336/Cys-381, Cys-349/Cys-359, Cys-366/Cys-403, and Cys-397/Cys-408. A D/ECD-tripeptide motif is present at residues 276–278 (ECD). Positions 278, 281, 293, and 294 each coordinate Ca(2+).

This sequence belongs to the venom metalloproteinase (M12B) family. P-III subfamily. P-IIIa sub-subfamily. As to quaternary structure, monomer. The cofactor is Zn(2+). In terms of tissue distribution, expressed by the venom gland.

The protein resides in the secreted. In terms of biological role, snake venom zinc metalloprotease that induces apoptosis in vascular endothelial cells (VEC), without degrading the extracellular matrix (it cannot cleave collagen) or inhibiting adhesion of VEC. Has also fibrinogenolytic and hemorrhagic activities. The polypeptide is Zinc metalloproteinase-disintegrin-like batroxstatin-3 (Bothrops atrox (Barba amarilla)).